Consider the following 63-residue polypeptide: DNA gyrase inhibitor YacG (63 aa).

Zn(2+) contacts are provided by Cys9, Cys12, Cys28, and Cys32.

This sequence belongs to the DNA gyrase inhibitor YacG family. Interacts with GyrB. It depends on Zn(2+) as a cofactor.

Inhibits all the catalytic activities of DNA gyrase by preventing its interaction with DNA. Acts by binding directly to the C-terminal domain of GyrB, which probably disrupts DNA binding by the gyrase. The chain is DNA gyrase inhibitor YacG from Salmonella arizonae (strain ATCC BAA-731 / CDC346-86 / RSK2980).